We begin with the raw amino-acid sequence, 544 residues long: U1 small nuclear ribonucleoprotein component PRP42 (544 aa).

5 HAT repeats span residues 7–39 (LIHD…YIVK), 51–83 (QLLK…LEYK), 85–118 (GNVS…FCNN), 121–156 (SHQK…QISS), and 163–195 (KYWN…DIMD). The Nuclear localization signal signature appears at 230 to 235 (KKKLKK). 4 HAT repeats span residues 255–288 (FESK…YTIT), 290–322 (QTDS…WLIN), 366–397 (NLLE…FKTF), and 456–488 (VEKN…LIYF).

Component of the 18S U1 snRNP particle, a subcomplex of the spliceosome.

Its subcellular location is the nucleus. Its function is as follows. Essential component of the U1 snRNP particle, which recognizes and binds the 5'-splice site of pre-mRNA. Together with other non-snRNP factors, U1 snRNP forms the spliceosomal commitment complex, that targets pre-mRNA to the splicing pathway. U1 snRNP is cotranscriptionally recruited to intron-containing genes. Required for U1 snRNP biogenesis. This chain is U1 small nuclear ribonucleoprotein component PRP42 (PRP42), found in Saccharomyces cerevisiae (strain ATCC 204508 / S288c) (Baker's yeast).